The sequence spans 227 residues: Cytochrome c biogenesis ATP-binding export protein CcmA (227 aa).

Residues 26–227 (LAASGLGFSR…ARTLRLDARS (202 aa)) enclose the ABC transporter domain. 58 to 65 (GANGSGKT) lines the ATP pocket.

Belongs to the ABC transporter superfamily. CcmA exporter (TC 3.A.1.107) family. In terms of assembly, the complex is composed of two ATP-binding proteins (CcmA) and two transmembrane proteins (CcmB).

The protein localises to the cell inner membrane. The catalysed reaction is heme b(in) + ATP + H2O = heme b(out) + ADP + phosphate + H(+). Its function is as follows. Part of the ABC transporter complex CcmAB involved in the biogenesis of c-type cytochromes; once thought to export heme, this seems not to be the case, but its exact role is uncertain. Responsible for energy coupling to the transport system. This Cupriavidus necator (strain ATCC 17699 / DSM 428 / KCTC 22496 / NCIMB 10442 / H16 / Stanier 337) (Ralstonia eutropha) protein is Cytochrome c biogenesis ATP-binding export protein CcmA.